Here is a 184-residue protein sequence, read N- to C-terminus: Photosystem I assembly protein Ycf4 (184 aa).

2 helical membrane-spanning segments follow: residues 22–42 (FCWA…GISS) and 57–77 (IVFF…LFIS).

It belongs to the Ycf4 family.

It localises to the plastid. It is found in the chloroplast thylakoid membrane. Functionally, seems to be required for the assembly of the photosystem I complex. This chain is Photosystem I assembly protein Ycf4, found in Coffea arabica (Arabian coffee).